The primary structure comprises 300 residues: MPATRLDGKKIAAEIRSEVAADVETFVSGGNPPPQLAAVLVGEDPASQVYVRNKERACAKAGIASRLDRMPAATTQAELLAKVAELNADPAVSGILVQLPLPSKANGGTGIDERAVLDAIDPIKDVDAFSPVNVGLLMQGRPRFLPCTPHGIVQLLHRTGIETSGKHVVVVGRSDIVGKPMAMMLAQKDSTCGPAVANATVTIAHSRTSNLAEICRQADILIAAVGRPEMITAEMIQPGAVVIDVGINRVGDKLVGDVAFDEAEAVASAITPVPGGVGPLTIAMLLHNTLMAAKMQAASN.

NADP(+) contacts are provided by residues 172-174 (GRS), Ser-206, and Ile-247.

It belongs to the tetrahydrofolate dehydrogenase/cyclohydrolase family. Homodimer.

The enzyme catalyses (6R)-5,10-methylene-5,6,7,8-tetrahydrofolate + NADP(+) = (6R)-5,10-methenyltetrahydrofolate + NADPH. The catalysed reaction is (6R)-5,10-methenyltetrahydrofolate + H2O = (6R)-10-formyltetrahydrofolate + H(+). It functions in the pathway one-carbon metabolism; tetrahydrofolate interconversion. In terms of biological role, catalyzes the oxidation of 5,10-methylenetetrahydrofolate to 5,10-methenyltetrahydrofolate and then the hydrolysis of 5,10-methenyltetrahydrofolate to 10-formyltetrahydrofolate. The chain is Bifunctional protein FolD from Rhodopirellula baltica (strain DSM 10527 / NCIMB 13988 / SH1).